The chain runs to 293 residues: 4-hydroxy-tetrahydrodipicolinate synthase (293 aa).

Residue T47 coordinates pyruvate. Y136 serves as the catalytic Proton donor/acceptor. K164 serves as the catalytic Schiff-base intermediate with substrate. A pyruvate-binding site is contributed by I206.

Belongs to the DapA family. Homotetramer; dimer of dimers.

Its subcellular location is the cytoplasm. The catalysed reaction is L-aspartate 4-semialdehyde + pyruvate = (2S,4S)-4-hydroxy-2,3,4,5-tetrahydrodipicolinate + H2O + H(+). It functions in the pathway amino-acid biosynthesis; L-lysine biosynthesis via DAP pathway; (S)-tetrahydrodipicolinate from L-aspartate: step 3/4. Catalyzes the condensation of (S)-aspartate-beta-semialdehyde [(S)-ASA] and pyruvate to 4-hydroxy-tetrahydrodipicolinate (HTPA). The polypeptide is 4-hydroxy-tetrahydrodipicolinate synthase (Listeria monocytogenes serovar 1/2a (strain ATCC BAA-679 / EGD-e)).